The chain runs to 361 residues: Anthranilate phosphoribosyltransferase (361 aa).

Residues glycine 101, 104–105, threonine 109, 111–114, 129–137, and serine 141 each bind 5-phospho-alpha-D-ribose 1-diphosphate; these read GD, NIST, and KHGNRGVSS. Glycine 101 contacts anthranilate. A Mg(2+)-binding site is contributed by serine 113. Position 132 (asparagine 132) interacts with anthranilate. Arginine 187 contacts anthranilate. Residues aspartate 245 and glutamate 246 each coordinate Mg(2+).

This sequence belongs to the anthranilate phosphoribosyltransferase family. Homodimer. Mg(2+) is required as a cofactor.

It carries out the reaction N-(5-phospho-beta-D-ribosyl)anthranilate + diphosphate = 5-phospho-alpha-D-ribose 1-diphosphate + anthranilate. It functions in the pathway amino-acid biosynthesis; L-tryptophan biosynthesis; L-tryptophan from chorismate: step 2/5. In terms of biological role, catalyzes the transfer of the phosphoribosyl group of 5-phosphorylribose-1-pyrophosphate (PRPP) to anthranilate to yield N-(5'-phosphoribosyl)-anthranilate (PRA). The polypeptide is Anthranilate phosphoribosyltransferase (Shewanella denitrificans (strain OS217 / ATCC BAA-1090 / DSM 15013)).